The sequence spans 228 residues: Small ribosomal subunit protein uS3 (228 aa).

The KH type-2 domain maps to 39 to 107 (VRAYLQDKLK…PVHINIEEIR (69 aa)).

It belongs to the universal ribosomal protein uS3 family. Part of the 30S ribosomal subunit. Forms a tight complex with proteins S10 and S14.

In terms of biological role, binds the lower part of the 30S subunit head. Binds mRNA in the 70S ribosome, positioning it for translation. This is Small ribosomal subunit protein uS3 from Ectopseudomonas mendocina (strain ymp) (Pseudomonas mendocina).